The chain runs to 243 residues: Ion-translocating oxidoreductase complex subunit E (243 aa).

The next 6 helical transmembrane spans lie at 40 to 60 (LGMG…ISAL), 72 to 92 (AFIL…NAWL), 94 to 114 (DLHK…AILG), 129 to 149 (ALDG…VGAI), 152 to 172 (ILGS…HFAF), and 183 to 203 (GFLI…LFAL).

Belongs to the NqrDE/RnfAE family. The complex is composed of six subunits: RnfA, RnfB, RnfC, RnfD, RnfE and RnfG.

The protein localises to the cellular chromatophore membrane. Its function is as follows. Part of a membrane-bound complex that couples electron transfer with translocation of ions across the membrane. Required for nitrogen fixation. Involved in electron transfer to nitrogenase. The sequence is that of Ion-translocating oxidoreductase complex subunit E from Rhodobacter capsulatus (Rhodopseudomonas capsulata).